Here is a 236-residue protein sequence, read N- to C-terminus: UPF0257 lipoprotein YnfC (236 aa).

An N-terminal signal peptide occupies residues 1-16; that stretch reads MKYKLLPCLLAILLTG. A lipid anchor (N-palmitoyl cysteine) is attached at cysteine 17. A lipid anchor (S-diacylglycerol cysteine) is attached at cysteine 17.

It belongs to the UPF0257 family.

The protein localises to the cell membrane. This is UPF0257 lipoprotein YnfC from Escherichia coli O157:H7.